The primary structure comprises 158 residues: Urease accessory protein UreE (158 aa).

Belongs to the UreE family.

The protein resides in the cytoplasm. Involved in urease metallocenter assembly. Binds nickel. Probably functions as a nickel donor during metallocenter assembly. The sequence is that of Urease accessory protein UreE from Corynebacterium urealyticum (strain ATCC 43042 / DSM 7109).